Consider the following 441-residue polypeptide: Zinc finger and BTB domain-containing protein 26 (441 aa).

Positions 33–97 constitute a BTB domain; the sequence is CDVTVLIDDI…CYSGVLEFPE (65 aa). Residues 134–177 form a disordered region; that stretch reads DSKEGCEPQSASPQSKEQQGDARGSPKQDSPCIHPSEDSMDMED. Residue lysine 184 forms a Glycyl lysine isopeptide (Lys-Gly) (interchain with G-Cter in SUMO2) linkage. A disordered region spans residues 194-216; that stretch reads VRSKKDQNQFISSEPTALHSSEP. Residues 201–216 show a composition bias toward polar residues; sequence NQFISSEPTALHSSEP. Residue lysine 255 forms a Glycyl lysine isopeptide (Lys-Gly) (interchain with G-Cter in SUMO2) linkage. C2H2-type zinc fingers lie at residues 273–295, 298–320, 326–348, and 354–377; these read HQCP…LKMH, FMCL…MRVH, FQCK…LNLH, and HKCN…KQLH. Residue lysine 329 forms a Glycyl lysine isopeptide (Lys-Gly) (interchain with G-Cter in SUMO2) linkage.

Ubiquitous.

The protein resides in the nucleus. Functionally, may be involved in transcriptional regulation. This is Zinc finger and BTB domain-containing protein 26 (ZBTB26) from Homo sapiens (Human).